The primary structure comprises 971 residues: Nuclear factor NF-kappa-B p105 subunit (971 aa).

The RHD domain occupies 40–365; that stretch reads PYLQILEQPK…EVQRKRQKLM (326 aa). Cys59 is subject to S-nitrosocysteine; alternate. Cys59 carries the S-(15-deoxy-Delta12,14-prostaglandin J2-9-yl)cysteine; alternate lipid modification. Residue Lys323 forms a Glycyl lysine isopeptide (Lys-Gly) (interchain with G-Cter in SUMO2) linkage. Phosphoserine; by PKA is present on Ser335. The Nuclear localization signal signature appears at 358–363; that stretch reads QRKRQK. The segment at 370 to 392 is GRR; that stretch reads DSFGGGSGAGAGGGGMFGSGGGG. Residues 433-971 form an interaction with CFLAR region; it reads INTKFKNGPK…GQEGPIEGKI (539 aa). Lys438 carries the N6-acetyllysine; by EP300 modification. Residues 439–470 form a disordered region; that stretch reads NGPKDCAKSDDEESLTLPEKETEGEGPSLPMA. Ser447 bears the Phosphoserine mark. 6 ANK repeats span residues 538 to 567, 577 to 606, 610 to 639, 646 to 675, 680 to 710, and 714 to 743; these read NGDSVLHLAIIHLHAQLVRDLLEVTSGLIS, LYQTPLHLAVITKQEDVVEDLLRVGADLSL, WGNSVLHLAAKEGHDRILSILLKSRKAAPL, EGLNAIHIAVMSNSLPCLLLLVAAGAEVNA, SGRTALHLAVEYDNISLAGCLLLEGDAHVDS, and DGTTPLHIAAGRGSTRLAALLKAAGADPLV. Positions 646-680 are essential for interaction with HIF1AN; it reads EGLNAIHIAVMSNSLPCLLLLVAAGAEVNAQEQKS. A (3S)-3-hydroxyasparagine; by HIF1AN modification is found at Asn674. The residue at position 755 (Ser755) is a Phosphoserine. The ANK 7 repeat unit spans residues 767 to 797; sequence PGTTPLDMAANWQVFDILNGKPYEPVFTSDD. The Death domain occupies 801–888; sequence QGDMKQLTED…EAIEVIQAAF (88 aa). Phosphoserine is present on Ser896. Ser910 is modified (phosphoserine; by GSK3-beta; in vitro). At Ser926 the chain carries Phosphoserine. A phosphoserine; by IKKB mark is found at Ser930 and Ser935. Phosphoserine is present on Ser940. Thr946 bears the Phosphothreonine mark.

Component of the NF-kappa-B p65-p50 complex. Homodimer; component of the NF-kappa-B p50-p50 complex. Component of the NF-kappa-B p105-p50 complex. Component of the NF-kappa-B p50-c-Rel complex. Component of a complex consisting of the NF-kappa-B p50-p50 homodimer and BCL3. Also interacts with MAP3K8. NF-kappa-B p50 subunit interacts with NCOA3 coactivator, which may coactivate NF-kappa-B dependent expression via its histone acetyltransferase activity. Interacts with TSC22D3; this interaction prevents nuclear translocation and DNA-binding. Interacts with SPAG9 and UNC5CL. NFKB1/p105 interacts with CFLAR; the interaction inhibits p105 processing into p50. NFKB1/p105 forms a ternary complex with MAP3K8 and TNIP2. Interacts with GSK3B; the interaction prevents processing of p105 to p50. NFKB1/p50 interacts with NFKBIE. NFKB1/p50 interacts with NFKBIZ. Nuclear factor NF-kappa-B p50 subunit interacts with NFKBID. Directly interacts with MEN1. Interacts with HIF1AN. Interacts with FEM1AA; interaction is direct. In terms of processing, generation of the NF-kappa-B p50 (Nuclear factor NF-kappa-B p50 subunit) transcription factor takes place both cotranslationally and post-translationally via non-mutually exclusive mechanisms. A cotranslational processing allows the production of both p50 and p105 (Nuclear factor NF-kappa-B p105 subunit) from a single NFKB1 mRNA. While translation occurs, the particular unfolded structure after the GRR repeat region acts as a substrate for the proteasome, promoting degradation of the C-terminus. The GRR acts as a proteasomal 'stop signal', protecting the region upstream of the GRR from degradation and promoting generation of p50. It is unclear if limited proteasome degradation during cotranslational processing depends on ubiquitination. NF-kappa-B p50 is also generated post-translationally following ubiquitination by the KPC complex, leading to limited processing by the proteasome downstream of the GRR region, thereby generating p50. Post-translationally, phosphorylation at the C-terminus by IKBKB/IKKB acts as a signal for ubiquitination and promotes either complete degradation or processing to generate the NF-kappa-B p50 (Nuclear factor NF-kappa-B p50 subunit). Phosphorylation at Ser-910 primes p105 for proteolytic processing in response to TNF-alpha stimulation. Phosphorylation at Ser-926, Ser-930 and Ser-935 are required for BTRC/BTRCP-mediated ubiquitination and proteolysis. Phosphorylation at Ser-930 is also required for ubiquitination by the KPC complex and limited processing to generate NF-kappa-B p50 (Nuclear factor NF-kappa-B p50 subunit). Polyubiquitinated at multiple Lys residues in the C-terminus. Polyubiquitinated by the SCF(FBXW11) and SCF(BTRC) complexes following phosphorylation at Ser-926, Ser-930 and Ser-935, leading to its complete degradation. In contrast, polyubiquitination by the KPC complex following phosphorylation at Ser-930 leads to limited proteosomal processing and generation of the active NF-kappa-B p50 (Nuclear factor NF-kappa-B p50 subunit). In terms of processing, S-nitrosylation of Cys-59 affects DNA binding. Post-translationally, the covalent modification of cysteine by 15-deoxy-Delta12,14-prostaglandin-J2 is autocatalytic and reversible. It may occur as an alternative to other cysteine modifications, such as S-nitrosylation and S-palmitoylation.

The protein localises to the cytoplasm. The protein resides in the nucleus. In terms of biological role, NF-kappa-B is a pleiotropic transcription factor present in almost all cell types and is the endpoint of a series of signal transduction events that are initiated by a vast array of stimuli related to many biological processes such as inflammation, immunity, differentiation, cell growth, tumorigenesis and apoptosis. NF-kappa-B is a homo- or heterodimeric complex formed by the Rel-like domain-containing proteins RELA/p65, RELB, NFKB1/p105, NFKB1/p50, REL and NFKB2/p52 and the heterodimeric p65-p50 complex appears to be most abundant one. The dimers bind at kappa-B sites in the DNA of their target genes and the individual dimers have distinct preferences for different kappa-B sites that they can bind with distinguishable affinity and specificity. Different dimer combinations act as transcriptional activators or repressors, respectively. NF-kappa-B is controlled by various mechanisms of post-translational modification and subcellular compartmentalization as well as by interactions with other cofactors or corepressors. NF-kappa-B complexes are held in the cytoplasm in an inactive state complexed with members of the NF-kappa-B inhibitor (I-kappa-B) family. In a conventional activation pathway, I-kappa-B is phosphorylated by I-kappa-B kinases (IKKs) in response to different activators, subsequently degraded thus liberating the active NF-kappa-B complex which translocates to the nucleus. NF-kappa-B heterodimeric p65-p50 and RelB-p50 complexes are transcriptional activators. The NF-kappa-B p50-p50 homodimer is a transcriptional repressor, but can act as a transcriptional activator when associated with BCL3. NFKB1 appears to have dual functions such as cytoplasmic retention of attached NF-kappa-B proteins by p105 and generation of p50 by a cotranslational processing. The proteasome-mediated process ensures the production of both p50 and p105 and preserves their independent function, although processing of NFKB1/p105 also appears to occur post-translationally. p50 binds to the kappa-B consensus sequence 5'-GGRNNYYCC-3', located in the enhancer region of genes involved in immune response and acute phase reactions. Plays a role in the regulation of apoptosis. In a complex with MAP3K8, NFKB1/p105 represses MAP3K8-induced MAPK signaling; active MAP3K8 is released by proteasome-dependent degradation of NFKB1/p105. Its function is as follows. P105 is the precursor of the active p50 subunit (Nuclear factor NF-kappa-B p50 subunit) of the nuclear factor NF-kappa-B. Acts as a cytoplasmic retention of attached NF-kappa-B proteins by p105. Constitutes the active form, which associates with RELA/p65 to form the NF-kappa-B p65-p50 complex to form a transcription factor. Together with RELA/p65, binds to the kappa-B consensus sequence 5'-GGRNNYYCC-3', located in the enhancer region of genes involved in immune response and acute phase reactions. Functionally, isoform 3 (p98) (but not p84 or p105) acts as a transactivator of NF-kappa-B-regulated gene expression. In terms of biological role, acts as an inhibitor of transactivation of p50 NF-kappa-B subunit, probably by sequestering it in the cytoplasm. This is Nuclear factor NF-kappa-B p105 subunit (Nfkb1) from Mus musculus (Mouse).